The following is a 340-amino-acid chain: Nicotinate-nucleotide--dimethylbenzimidazole phosphoribosyltransferase (340 aa).

Glutamate 305 functions as the Proton acceptor in the catalytic mechanism.

Belongs to the CobT family.

It catalyses the reaction 5,6-dimethylbenzimidazole + nicotinate beta-D-ribonucleotide = alpha-ribazole 5'-phosphate + nicotinate + H(+). It functions in the pathway nucleoside biosynthesis; alpha-ribazole biosynthesis; alpha-ribazole from 5,6-dimethylbenzimidazole: step 1/2. Catalyzes the synthesis of alpha-ribazole-5'-phosphate from nicotinate mononucleotide (NAMN) and 5,6-dimethylbenzimidazole (DMB). This chain is Nicotinate-nucleotide--dimethylbenzimidazole phosphoribosyltransferase, found in Allorhizobium ampelinum (strain ATCC BAA-846 / DSM 112012 / S4) (Agrobacterium vitis (strain S4)).